The sequence spans 529 residues: Protein PNS1 (529 aa).

The segment at 1-58 (MSQQYSYGGGGGAGYPPPQMQPPNSYAQANYQGQPQGAQNQYYNGQQPHHNAPQQYYG) is disordered. The Cytoplasmic portion of the chain corresponds to 1 to 84 (MSQQYSYGGG…LQPKPKFRDP (84 aa)). Positions 22 to 48 (PPNSYAQANYQGQPQGAQNQYYNGQQP) are enriched in low complexity. A helical membrane pass occupies residues 85-105 (IFLVLFLLVFAGFIALSVICL). The Extracellular segment spans residues 106-132 (RSYSNADVNVSIGRANVAGSTLNGHTA). N-linked (GlcNAc...) asparagine glycosylation is present at Asn-114. Residues 133–153 (IMFMICCAVALVLSFVYILLV) traverse the membrane as a helical segment. At 154-158 (RTFPK) the chain is on the cytoplasmic side. Residues 159–179 (IILEATLLLTTLSNVAFCVYL) traverse the membrane as a helical segment. At 180–184 (WVRGN) the chain is on the extracellular side. A helical membrane pass occupies residues 185–205 (TAAAIIFTIFAVLSVIAYFFM). Residues 206-230 (RKRIPLAKLILVTVIRTAEQYKSVY) are Cytoplasmic-facing. A helical transmembrane segment spans residues 231–251 (VVALGGLIVETAFSAWTSWVV). Residues 252 to 271 (VAAYQRFEPSGQAAGSSSSN) lie on the Extracellular side of the membrane. Asn-271 carries N-linked (GlcNAc...) asparagine glycosylation. Residues 272–292 (ASIIGIMVFIVFAYYWISEVI) form a helical membrane-spanning segment. Topologically, residues 293–294 (KN) are cytoplasmic. A helical membrane pass occupies residues 295-315 (IAFTTVAGIFGVAYYNANKVA). Topologically, residues 316–325 (NAAWGAFRRS) are extracellular. Residues 326-346 (MTYSLGSICFGSLIVAILDLL) form a helical membrane-spanning segment. The Cytoplasmic segment spans residues 347–362 (RALFNILQSQAASDGD). Residues 363-383 (MTGQILACVAGCCVSCIQGLV) form a helical membrane-spanning segment. Topologically, residues 384 to 427 (DYFNRYAYINIALYGNGYITAAKETWALLKDRGIDAIINDSLVN) are extracellular. N-linked (GlcNAc...) asparagine glycosylation is present at Asn-422. Residues 428 to 448 (IVFNCGAFIIGLLTALFAFIY) form a helical membrane-spanning segment. Residues 449–464 (EQLTNPRYLQNDAGYY) are Cytoplasmic-facing. The helical transmembrane segment at 465–485 (SIVLLVAFGLGFNIALSVGAG) threads the bilayer. The Extracellular segment spans residues 486 to 529 (SIASGVSTYFVALAEDPYILQGKNPELFEMIRQQYPQVVQGVNH).

It belongs to the CTL (choline transporter-like) family.

Its subcellular location is the cell membrane. Its function is as follows. Probably involved in transport through the plasma membrane. This Mycosarcoma maydis (Corn smut fungus) protein is Protein PNS1 (PNS1).